The following is a 301-amino-acid chain: Probable protein phosphatase 2C 4 (301 aa).

Residues 1–18 (MGPYLSQPNKNKTTTSGE) show a composition bias toward polar residues. The tract at residues 1 to 20 (MGPYLSQPNKNKTTTSGEGK) is disordered. One can recognise a PPM-type phosphatase domain in the interval 23–298 (IFAASEMQGW…DNMTTLIIYL (276 aa)). Residues D57, G58, D237, and D289 each coordinate Mn(2+).

The protein belongs to the PP2C family. The cofactor is Mg(2+). Mn(2+) is required as a cofactor.

It localises to the membrane. It catalyses the reaction O-phospho-L-seryl-[protein] + H2O = L-seryl-[protein] + phosphate. The enzyme catalyses O-phospho-L-threonyl-[protein] + H2O = L-threonyl-[protein] + phosphate. Functionally, enzyme with a broad specificity. The polypeptide is Probable protein phosphatase 2C 4 (Paramecium tetraurelia).